Consider the following 237-residue polypeptide: Phosphoribosylaminoimidazole-succinocarboxamide synthase (237 aa).

This sequence belongs to the SAICAR synthetase family.

The enzyme catalyses 5-amino-1-(5-phospho-D-ribosyl)imidazole-4-carboxylate + L-aspartate + ATP = (2S)-2-[5-amino-1-(5-phospho-beta-D-ribosyl)imidazole-4-carboxamido]succinate + ADP + phosphate + 2 H(+). Its pathway is purine metabolism; IMP biosynthesis via de novo pathway; 5-amino-1-(5-phospho-D-ribosyl)imidazole-4-carboxamide from 5-amino-1-(5-phospho-D-ribosyl)imidazole-4-carboxylate: step 1/2. This Shigella boydii serotype 4 (strain Sb227) protein is Phosphoribosylaminoimidazole-succinocarboxamide synthase.